The sequence spans 351 residues: Nicotinate-nucleotide--dimethylbenzimidazole phosphoribosyltransferase (351 aa).

The Proton acceptor role is filled by glutamate 317.

This sequence belongs to the CobT family.

The enzyme catalyses 5,6-dimethylbenzimidazole + nicotinate beta-D-ribonucleotide = alpha-ribazole 5'-phosphate + nicotinate + H(+). The protein operates within nucleoside biosynthesis; alpha-ribazole biosynthesis; alpha-ribazole from 5,6-dimethylbenzimidazole: step 1/2. Its function is as follows. Catalyzes the synthesis of alpha-ribazole-5'-phosphate from nicotinate mononucleotide (NAMN) and 5,6-dimethylbenzimidazole (DMB). This Pseudomonas putida (strain ATCC 47054 / DSM 6125 / CFBP 8728 / NCIMB 11950 / KT2440) protein is Nicotinate-nucleotide--dimethylbenzimidazole phosphoribosyltransferase.